We begin with the raw amino-acid sequence, 300 residues long: Lysenin-related protein 3 (300 aa).

The N-terminal cap domain stretch occupies residues 12–35; sequence EEIEVDVVAVWKEGYVYENRGDTS. A beta-hairpin domain region spans residues 36-109; sequence VEQKITMTKG…SQVIEHTVTI (74 aa). An N-terminal cap domain region spans residues 110–158; it reads PPTSKFTRWKLNADVGGTDIEYMYLIDEVTPISVTQTIPQVIRSRAKIL. Residues 159-299 are C-terminal receptor-binding domain; it reads VGRQIHLGTT…EDKWILEVVN (141 aa). Positions 187, 229, 235, and 284 each coordinate an N-(acyl)-sphingosylphosphocholine. A disulfide bond links Cys-274 and Cys-285.

This sequence belongs to the lysenin family. In terms of assembly, binds to sphingomyelin as a monomer by using its C-terminal domain. Forms a nonamer when sphingomyelin/LRP-3 ratio is lower than ca 500. Oligomerization, but not binding, is influenced by the fluidity of sphingomyelin. Expressed by coelomocytes.

It localises to the secreted. Its subcellular location is the target cell membrane. Functionally, pore-forming toxin that specifically binds sphingomyelin in the plasma membrane of various cells. Has antibacterial and hemolytic activity. This Eisenia fetida (Red wiggler worm) protein is Lysenin-related protein 3.